A 359-amino-acid polypeptide reads, in one-letter code: Protein disulfide-isomerase tigA (359 aa).

The N-terminal stretch at 1–19 is a signal peptide; the sequence is MVRLSNLVSCLGLASAVTA. Thioredoxin domains lie at 20-129 and 131-250; these read AVVD…EKTG and KPRG…EKTG. Residues cysteine 49, cysteine 52, cysteine 169, and cysteine 172 each act as nucleophile in the active site. Intrachain disulfides connect cysteine 49/cysteine 52 and cysteine 169/cysteine 172. The short motif at 356–359 is the Prevents secretion from ER element; the sequence is KDEL.

The protein belongs to the protein disulfide isomerase family.

The protein localises to the endoplasmic reticulum lumen. It carries out the reaction Catalyzes the rearrangement of -S-S- bonds in proteins.. The sequence is that of Protein disulfide-isomerase tigA (tigA) from Aspergillus niger.